Reading from the N-terminus, the 520-residue chain is Laccase (520 aa).

A signal peptide spans 1-21; sequence MHTFLRSTALVVAGLSARALA. 2 Plastocyanin-like domains span residues 22–148 and 160–304; these read SIGP…FVVY and VDDD…ILRY. Residue Asn75 is glycosylated (N-linked (GlcNAc...) asparagine). Cu cation-binding residues include His85, His87, His130, and His132. Disulfide bonds link Cys106-Cys509 and Cys138-Cys227. 2 N-linked (GlcNAc...) asparagine glycosylation sites follow: Asn352 and Asn402. Residues 373–496 form the Plastocyanin-like 3 domain; it reads TVPVLLQILS…VFAEDIPDVA (124 aa). Cu cation contacts are provided by His418, His421, His423, His473, Cys474, His475, and His479.

This sequence belongs to the multicopper oxidase family. Cu cation is required as a cofactor.

The protein localises to the secreted. It catalyses the reaction 4 hydroquinone + O2 = 4 benzosemiquinone + 2 H2O. Its function is as follows. Lignin degradation and detoxification of lignin-derived products. This chain is Laccase (LAC), found in Phlebia radiata (White-rot fungus).